We begin with the raw amino-acid sequence, 346 residues long: Dehydrogenase azaJ (346 aa).

43–48 provides a ligand contact to NADP(+); the sequence is VDYATQ. 133 to 140 is a binding site for substrate; sequence LAFSTAIV. NADP(+)-binding positions include 170–173, 193–196, Tyr-211, and 251–252; these read ATSV, SPHN, and LN. 269–273 contacts substrate; the sequence is APPNV. Residue 336-337 coordinates NADP(+); that stretch reads VS.

The protein belongs to the zinc-containing alcohol dehydrogenase family.

The protein operates within secondary metabolite biosynthesis. Dehydrogenase; part of the gene cluster that mediates the biosynthesis of azaphilones, a class of fungal metabolites characterized by a highly oxygenated pyrano-quinone bicyclic core and exhibiting a broad range of bioactivities. In the first step, the non-reducing polyketide synthase azaA forms the hexaketide precursor from successive condensations of five malonyl-CoA units, presumably with a simple acetyl-CoA starter unit. The reactive polyketide chain then undergoes a PT-mediated C2-C7 cyclization to afford the aromatic ring and is eventually released as an aldehyde through the R-domain. The putative ketoreductase azaE is proposed to catalyze the reduction of the terminal ketone resulting in the early culture product FK17-P2a. The monooxygenase azaH was demonstrated to be the only enzyme required to convert FK17-P2a to azanigerone E. AzaH first hydroxylates the benzaldehyde intermediate FK17-P2a at C4, which triggers the formation of the pyran-ring to afford azanigerone E. In parallel, the 2,4-dimethylhexanoyl chain is synthesized by the HR-PKS azaB and is proposed to be transferred to the C4-hydroxyl of azanigerone E by the acyltransferase azaD directly from the ACP domain of azaB. Alternatively, the 2,4-dimethyl-hexanoyl chain may be offloaded from the HR-PKS as a carboxylic acid and converted to an acyl-CoA by azaF. The resulting acyl-CoA molecule could then be taken up as a substrate by AzaD to form azanigerone B. To yield the carboxylic acid substituent in azanigerone A, the hydroxypropyl side chain of azanigerone B would need to undergo a C-C oxidative cleavage catalyzed by cytochrome P450 AzaI. AzaI is proposed to act on a vicinal diol that leads to a C-C bond scission either through an alkoxyradical intermediate or a peroxy complex. In the biosynthesis of azanigerone A, azanigerone B first undergoes hydroxylation at C10, possibly catalyzed by one of the two FAD-dependent monooxygenases encoded in the cluster, azaG or azaL, resulting in the vicinal diol azanigerone C. Oxidative cleavage of azanigerone C by azaI would yield the corresponding aldehyde derivative of azanigerone A. Finally, the dehydrogenase azaJ is proposed to convert the aldehyde functional group into the carboxylic acid, completing the conversion from azanigerone B to azanigerone A. Alternatively, the oxidation of aldehyde to carboxylic acid may be catalyzed by the same P450 enzyme azaI via consecutive oxidation or by endogenous alcohol dehydrogenase. This is Dehydrogenase azaJ from Aspergillus niger (strain ATCC 1015 / CBS 113.46 / FGSC A1144 / LSHB Ac4 / NCTC 3858a / NRRL 328 / USDA 3528.7).